Consider the following 72-residue polypeptide: Neuropeptide SIFamide (72 aa).

Residues 1-26 (MALRFTLTLLLVTILVAAILLGSSEA) form the signal peptide. The N-linked (GlcNAc...) asparagine glycan is linked to Asn-34. Phenylalanine amide is present on Phe-38. Residues 42–72 (NSLDYDSAKMSAVCEVAMEACPMWFPQNDSK) constitute a propeptide that is removed on maturation.

The protein belongs to the FARP (FMRFamide related peptide) family. Strongly expressed in two pairs of neurons in the pars intercerebralis (at protein level).

It is found in the secreted. Its function is as follows. Ligand for the neuropeptide SIFamide receptor. Modulates sexual behavior by negatively regulating female receptivity to male courtship and by playing a role in male sex discrimination. Also involved in promoting sleep. The polypeptide is Neuropeptide SIFamide (Drosophila melanogaster (Fruit fly)).